Here is a 244-residue protein sequence, read N- to C-terminus: L-xylulose reductase (244 aa).

Met-1 bears the N-acetylmethionine mark. Residue 11 to 39 (LVTGAGKGIGRSTVLALQAAGAHVVAVSR) participates in NADP(+) binding. Arg-21 bears the Omega-N-methylarginine mark. Ser-46 carries the phosphoserine modification. Residue Ser-136 participates in substrate binding. Residue Tyr-149 is the Proton acceptor of the active site. Lys-153 is a catalytic residue.

The protein belongs to the short-chain dehydrogenases/reductases (SDR) family. Homotetramer. Highly expressed in kidney and liver. Expressed in epididymis. Weakly expressed in brain, heart, lung, spleen and testis.

The protein resides in the membrane. It is found in the cytoplasmic vesicle. Its subcellular location is the secretory vesicle. The protein localises to the acrosome. The catalysed reaction is xylitol + NADP(+) = L-xylulose + NADPH + H(+). Catalyzes the NADPH-dependent reduction of several pentoses, tetroses, trioses, alpha-dicarbonyl compounds and L-xylulose. Participates in the uronate cycle of glucose metabolism. May play a role in the water absorption and cellular osmoregulation in the proximal renal tubules by producing xylitol, an osmolyte, thereby preventing osmolytic stress from occurring in the renal tubules. The chain is L-xylulose reductase (DCXR) from Mesocricetus auratus (Golden hamster).